The following is a 377-amino-acid chain: DNA-directed RNA polymerase subunit alpha (377 aa).

Residues 1-259 (MSDSSHNLLY…KHFSVFEKMD (259 aa)) form an alpha N-terminal domain (alpha-NTD) region. The interval 279-377 (ILHKLVLGIN…KIRSSKNTKG (99 aa)) is alpha C-terminal domain (alpha-CTD).

The protein belongs to the RNA polymerase alpha chain family. In terms of assembly, homodimer. The RNAP catalytic core consists of 2 alpha, 1 beta, 1 beta' and 1 omega subunit. When a sigma factor is associated with the core the holoenzyme is formed, which can initiate transcription.

The enzyme catalyses RNA(n) + a ribonucleoside 5'-triphosphate = RNA(n+1) + diphosphate. Its function is as follows. DNA-dependent RNA polymerase catalyzes the transcription of DNA into RNA using the four ribonucleoside triphosphates as substrates. The sequence is that of DNA-directed RNA polymerase subunit alpha from Chlamydia trachomatis serovar L2 (strain ATCC VR-902B / DSM 19102 / 434/Bu).